An 862-amino-acid chain; its full sequence is Phosphofurin acidic cluster sorting protein 2 (862 aa).

3 disordered regions span residues 151–215 (HEDS…TTSM), 263–436 (LDVE…TRSQ), and 658–713 (SSAT…SQGV). Low complexity predominate over residues 263–272 (LDVENPSDSG). Basic and acidic residues predominate over residues 313–328 (SHREPPSPADVPEKTR). Positions 332 to 344 (GKQQLSDSVSDTV) are enriched in polar residues. Phosphoserine is present on residues serine 361, serine 387, serine 424, serine 662, and serine 665. Low complexity-rich tracts occupy residues 658-693 (SSAT…KEAS) and 700-710 (PSVSGGLSSPS).

Belongs to the PACS family. In terms of assembly, interacts with BID and PKD2. Interacts with SIRT1. Interacts with HDAC1. Interacts with TRPV1. Interacts with WDR37.

Its subcellular location is the endoplasmic reticulum. It localises to the mitochondrion. Multifunctional sorting protein that controls the endoplasmic reticulum (ER)-mitochondria communication, including the apposition of mitochondria with the ER and ER homeostasis. In addition, in response to apoptotic inducer, translocates BIB to mitochondria, which initiates a sequence of events including the formation of mitochondrial truncated BID, the release of cytochrome c, the activation of caspase-3 thereby causing cell death. May also involved in ion channel trafficking, directing acidic cluster-containing ion channels to distinct subcellular compartments. This Mus musculus (Mouse) protein is Phosphofurin acidic cluster sorting protein 2 (Pacs2).